The following is a 317-amino-acid chain: Beta-ketoacyl-[acyl-carrier-protein] synthase III (317 aa).

Residues cysteine 112 and histidine 244 contribute to the active site. Residues 245-249 (QANIR) are ACP-binding. The active site involves asparagine 274.

The protein belongs to the thiolase-like superfamily. FabH family. As to quaternary structure, homodimer.

Its subcellular location is the cytoplasm. The catalysed reaction is malonyl-[ACP] + acetyl-CoA + H(+) = 3-oxobutanoyl-[ACP] + CO2 + CoA. The protein operates within lipid metabolism; fatty acid biosynthesis. Catalyzes the condensation reaction of fatty acid synthesis by the addition to an acyl acceptor of two carbons from malonyl-ACP. Catalyzes the first condensation reaction which initiates fatty acid synthesis and may therefore play a role in governing the total rate of fatty acid production. Possesses both acetoacetyl-ACP synthase and acetyl transacylase activities. Its substrate specificity determines the biosynthesis of branched-chain and/or straight-chain of fatty acids. This chain is Beta-ketoacyl-[acyl-carrier-protein] synthase III, found in Rickettsia prowazekii (strain Madrid E).